The primary structure comprises 303 residues: Coenzyme PQQ synthesis protein B (303 aa).

This sequence belongs to the PqqB family.

The protein operates within cofactor biosynthesis; pyrroloquinoline quinone biosynthesis. Its function is as follows. May be involved in the transport of PQQ or its precursor to the periplasm. The protein is Coenzyme PQQ synthesis protein B of Acinetobacter baumannii (strain ACICU).